The chain runs to 191 residues: MFLIVGLGNPGNEYENTRHNIGFKVIDNIAKEYNIEINRQKFKGMYGEGFINGKKVMLLKPTTYMNLSGESVREVVDFYNLNNDEILVIYDDISLEVGKLRIREKGSAGGHNGIKSIIAHLNSEIFSRIKVGVGQPNGDLVKHVLGKFTKEETAILSESIEASTKAAAEIIKNDVKTAMNQFNGFKASTTV.

Tyr-14 serves as a coordination point for tRNA. Catalysis depends on His-19, which acts as the Proton acceptor. Residues Tyr-64, Asn-66, and Asn-112 each coordinate tRNA.

It belongs to the PTH family. As to quaternary structure, monomer.

Its subcellular location is the cytoplasm. The enzyme catalyses an N-acyl-L-alpha-aminoacyl-tRNA + H2O = an N-acyl-L-amino acid + a tRNA + H(+). In terms of biological role, hydrolyzes ribosome-free peptidyl-tRNAs (with 1 or more amino acids incorporated), which drop off the ribosome during protein synthesis, or as a result of ribosome stalling. Functionally, catalyzes the release of premature peptidyl moieties from peptidyl-tRNA molecules trapped in stalled 50S ribosomal subunits, and thus maintains levels of free tRNAs and 50S ribosomes. In Clostridium beijerinckii (strain ATCC 51743 / NCIMB 8052) (Clostridium acetobutylicum), this protein is Peptidyl-tRNA hydrolase.